The sequence spans 254 residues: Vitamin B12 import ATP-binding protein BtuD (254 aa).

The ABC transporter domain maps to 1–239 (MHINHISVGN…ENLQQVFETP (239 aa)). 29–36 (GPNGSGKS) is an ATP binding site.

This sequence belongs to the ABC transporter superfamily. Vitamin B12 importer (TC 3.A.1.13.1) family. The complex is composed of two ATP-binding proteins (BtuD), two transmembrane proteins (BtuC) and a solute-binding protein (BtuF).

The protein localises to the cell inner membrane. The enzyme catalyses an R-cob(III)alamin(out) + ATP + H2O = an R-cob(III)alamin(in) + ADP + phosphate + H(+). Its function is as follows. Part of the ABC transporter complex BtuCDF involved in vitamin B12 import. Responsible for energy coupling to the transport system. This chain is Vitamin B12 import ATP-binding protein BtuD, found in Vibrio vulnificus (strain YJ016).